Here is a 99-residue protein sequence, read N- to C-terminus: Integration host factor subunit alpha (99 aa).

This sequence belongs to the bacterial histone-like protein family. In terms of assembly, heterodimer of an alpha and a beta chain.

This protein is one of the two subunits of integration host factor, a specific DNA-binding protein that functions in genetic recombination as well as in transcriptional and translational control. In Xylella fastidiosa (strain M12), this protein is Integration host factor subunit alpha.